A 515-amino-acid polypeptide reads, in one-letter code: Bifunctional purine biosynthesis protein PurH (515 aa).

An MGS-like domain is found at 1 to 145 (MTKRALISVS…KNHASVTVVV (145 aa)).

This sequence belongs to the PurH family.

The catalysed reaction is (6R)-10-formyltetrahydrofolate + 5-amino-1-(5-phospho-beta-D-ribosyl)imidazole-4-carboxamide = 5-formamido-1-(5-phospho-D-ribosyl)imidazole-4-carboxamide + (6S)-5,6,7,8-tetrahydrofolate. It carries out the reaction IMP + H2O = 5-formamido-1-(5-phospho-D-ribosyl)imidazole-4-carboxamide. The protein operates within purine metabolism; IMP biosynthesis via de novo pathway; 5-formamido-1-(5-phospho-D-ribosyl)imidazole-4-carboxamide from 5-amino-1-(5-phospho-D-ribosyl)imidazole-4-carboxamide (10-formyl THF route): step 1/1. It participates in purine metabolism; IMP biosynthesis via de novo pathway; IMP from 5-formamido-1-(5-phospho-D-ribosyl)imidazole-4-carboxamide: step 1/1. The protein is Bifunctional purine biosynthesis protein PurH of Streptococcus thermophilus (strain ATCC BAA-491 / LMD-9).